The primary structure comprises 616 residues: ATP-dependent zinc metalloprotease FtsH 3 (616 aa).

At 1-9 (MSKNNKKWR) the chain is on the cytoplasmic side. Residues 10-30 (NAGLYALLLIVVLALASAFFD) form a helical membrane-spanning segment. Residues 31-108 (RPTQTRETLS…VQPQSDEGFW (78 aa)) lie on the Lumenal side of the membrane. A helical transmembrane segment spans residues 109–129 (FRIASTLFLPILLLVGIFFLF). The Cytoplasmic portion of the chain corresponds to 130-616 (RRAQSGPGSQ…NNNAKLALLV (487 aa)). Residue 201-208 (GPPGTGKT) coordinates ATP. His423 contacts Zn(2+). Residue Glu424 is part of the active site. 2 residues coordinate Zn(2+): His427 and Asp504.

In the central section; belongs to the AAA ATPase family. It in the C-terminal section; belongs to the peptidase M41 family. In terms of assembly, homohexamer (Potential). Part of a large complex that includes FtsH2 and PSII. Coimmunoprecipitates with YidC. It depends on Zn(2+) as a cofactor.

The protein localises to the cellular thylakoid membrane. Acts as a processive, ATP-dependent zinc metallopeptidase for both cytoplasmic and membrane proteins. Plays a role in the quality control of integral membrane proteins. The chain is ATP-dependent zinc metalloprotease FtsH 3 from Synechocystis sp. (strain ATCC 27184 / PCC 6803 / Kazusa).